Consider the following 366-residue polypeptide: Quinolinate synthase (366 aa).

Residues His44 and Ser61 each contribute to the iminosuccinate site. Residue Cys108 coordinates [4Fe-4S] cluster. Iminosuccinate-binding positions include 139–141 (YIN) and Ser160. Cys228 is a binding site for [4Fe-4S] cluster. Residues 254 to 256 (HPE) and Thr271 each bind iminosuccinate. Cys318 serves as a coordination point for [4Fe-4S] cluster.

Belongs to the quinolinate synthase family. Type 3 subfamily. Requires [4Fe-4S] cluster as cofactor.

Its subcellular location is the cytoplasm. The catalysed reaction is iminosuccinate + dihydroxyacetone phosphate = quinolinate + phosphate + 2 H2O + H(+). It participates in cofactor biosynthesis; NAD(+) biosynthesis; quinolinate from iminoaspartate: step 1/1. Its function is as follows. Catalyzes the condensation of iminoaspartate with dihydroxyacetone phosphate to form quinolinate. The polypeptide is Quinolinate synthase (Listeria monocytogenes serotype 4b (strain F2365)).